The primary structure comprises 120 residues: MFLSHQYDSFWIFLLVCISIPLLAFSITRFAAPPREGPEKSTSYESGIEPKGDTWIRFQIRYYMFALVFTVFDVETVFLYPWATSFEELGLFAFVEVIVFIFILIVGLVYAWRKGALEWC.

Helical transmembrane passes span 7–27, 63–83, and 89–109; these read YDSF…AFSI, YMFA…YPWA, and LGLF…VGLV.

This sequence belongs to the complex I subunit 3 family. As to quaternary structure, NDH is composed of at least 16 different subunits, 5 of which are encoded in the nucleus.

It localises to the plastid. It is found in the chloroplast thylakoid membrane. The enzyme catalyses a plastoquinone + NADH + (n+1) H(+)(in) = a plastoquinol + NAD(+) + n H(+)(out). It catalyses the reaction a plastoquinone + NADPH + (n+1) H(+)(in) = a plastoquinol + NADP(+) + n H(+)(out). Functionally, NDH shuttles electrons from NAD(P)H:plastoquinone, via FMN and iron-sulfur (Fe-S) centers, to quinones in the photosynthetic chain and possibly in a chloroplast respiratory chain. The immediate electron acceptor for the enzyme in this species is believed to be plastoquinone. Couples the redox reaction to proton translocation, and thus conserves the redox energy in a proton gradient. The sequence is that of NAD(P)H-quinone oxidoreductase subunit 3, chloroplastic from Adiantum capillus-veneris (Maidenhair fern).